A 508-amino-acid polypeptide reads, in one-letter code: Methionine--tRNA ligase (508 aa).

Residues 12-22 (YYVNDIPHIGH) carry the 'HIGH' region motif. Positions 295–299 (KISKS) match the 'KMSKS' region motif. K298 serves as a coordination point for ATP.

Belongs to the class-I aminoacyl-tRNA synthetase family. MetG type 2B subfamily. Monomer.

The protein localises to the cytoplasm. It carries out the reaction tRNA(Met) + L-methionine + ATP = L-methionyl-tRNA(Met) + AMP + diphosphate. Its function is as follows. Is required not only for elongation of protein synthesis but also for the initiation of all mRNA translation through initiator tRNA(fMet) aminoacylation. The polypeptide is Methionine--tRNA ligase (Rickettsia conorii (strain ATCC VR-613 / Malish 7)).